Consider the following 80-residue polypeptide: RNA-binding protein KhpA (80 aa).

Residues 33-80 form the KH domain; that stretch reads GRTVEVHVHPDDLGKVIGRGGRTATALRKLVAGIGGRGIRVDVVDTDQ.

This sequence belongs to the KhpA RNA-binding protein family.

The protein localises to the cytoplasm. In terms of biological role, a probable RNA-binding protein. In Mycobacterium leprae (strain TN), this protein is RNA-binding protein KhpA.